The primary structure comprises 191 residues: Thymidine kinase (191 aa).

Residues 15-22 (GPMYSGKT) and 88-91 (DEAQ) each bind ATP. Glu89 functions as the Proton acceptor in the catalytic mechanism. Cys145, Cys148, Cys183, and Cys186 together coordinate Zn(2+).

This sequence belongs to the thymidine kinase family. As to quaternary structure, homotetramer.

Its subcellular location is the cytoplasm. It catalyses the reaction thymidine + ATP = dTMP + ADP + H(+). The protein is Thymidine kinase of Clostridium botulinum (strain Kyoto / Type A2).